Here is a 776-residue protein sequence, read N- to C-terminus: Angiomotin-like protein 2 (776 aa).

Residues 41-88 are disordered; that stretch reads GGAGAGGTGSPQASAEILAPEDTQVLQQATRQEPQGQEHQGGESHLAE. The required for interaction with CDH5 stretch occupies residues 101 to 307; the sequence is GEELPTYEEA…STQTSSAPSG (207 aa). Y107 carries the phosphotyrosine modification. Disordered regions lie at residues 119 to 142, 169 to 215, and 283 to 309; these read AQQA…GHRS, RNGA…QYPH, and GPLG…SGSA. Polar residues predominate over residues 177-192; the sequence is HMSSSHSFPQLARNQQ. Positions 196 to 213 are enriched in pro residues; sequence PRGPPAEGPEPRGPPPQY. The required for interaction with CDH1 stretch occupies residues 220-307; the sequence is HETATAVTDP…STQTSSAPSG (88 aa). The segment covering 297 to 306 has biased composition (polar residues); sequence ASTQTSSAPS. Coiled-coil stretches lie at residues 314–509 and 543–570; these read METL…LELR and ALRL…WEQK. Residues K347 and K408 each participate in a glycyl lysine isopeptide (Lys-Gly) (interchain with G-Cter in ubiquitin) cross-link. Disordered regions lie at residues 591–620 and 677–743; these read QRDT…GHRH and TQGW…LDPD. Polar residues predominate over residues 678–687; sequence QGWQSLSSSE. Phosphoserine occurs at positions 756 and 759. Residues 773–776 carry the PDZ-binding motif; sequence EILI.

Belongs to the angiomotin family. Part of a complex composed of AMOTL2, MAGI1 and CDH5, within the complex AMOTL2 acts as a scaffold protein for the interaction of MAGI1 with CDH5. The complex is required for coupling actin fibers to cell junctions in endothelial cells. Within the complex AMOTL2 (via its N-terminus) interacts with CDH5. Interacts (via N-terminus) with MAGI1. Interacts (via N-terminus) with ACTB; the interaction facilitates binding of cell junction complexes to actin fibers in endothelial cells. Interacts with CDH1; the interaction may facilitate binding of radial actin fibers to cell junction complexes. Interacts with SRC. Interacts with YAP1; the interaction is required for ubiquitination of AMOTL2 and localization of YAP1 to tight junctions. Interacts with WWP1; the interaction facilitates WWP1 interaction with the Crumbs complex and subsequent WWP1 translocation to the plasma membrane. WPP1 interaction with the Crumbs complex promotes WPP1 monoubiquitination of AMOTL2 which subsequently activates the Hippo signaling pathway. When ubiquitinated interacts with LATS2 (via UBA domain); the interaction promotes LATS2 phosphorylation of YAP1. Interacts (via PPXY motif) with WWTR1/TAZ (via WW domain); the interaction promotes WWTR1/TAZ localization to the cytoplasm and thereby inhibition of its transcriptional properties. Interacts with PHLDB2; interaction may facilitate PHLDB2 localization to the myotube podosome cortex that surrounds the core. Monoubiquitinated at Lys-347 and Lys-408 by Crumbs complex-bound WWP1. De-ubiquitinated at Lys-347 and Lys-408 by USP9X; the interaction may be promoted by cell contact inhibition. Deubiquitination of AMOTL2 negatively regulates Hippo signaling activation. Post-translationally, phosphorylation at Tyr-107 is necessary for efficient binding to SRC and synergistically functioning with SRC to activate the downstream MAPK pathway.

Its subcellular location is the recycling endosome. The protein resides in the cytoplasm. It localises to the cell projection. The protein localises to the podosome. It is found in the cell junction. Functionally, regulates the translocation of phosphorylated SRC to peripheral cell-matrix adhesion sites. Required for proper architecture of actin filaments. Plays a role in coupling actin fibers to cell junctions in endothelial cells and is therefore required for correct endothelial cell morphology via facilitating transcellular transmission of mechanical force resulting in endothelial cell elongation. Required for the anchoring of radial actin fibers to CDH1 junction complexes at the cell membrane which facilitates organization of radial actin fiber structure and cellular response to contractile forces. This contributes to maintenance of cell area, size, shape, epithelial sheet organization and trophectoderm cell properties that facilitate blastocyst zona hatching. Inhibits the Wnt/beta-catenin signaling pathway, probably by recruiting CTNNB1 to recycling endosomes and hence preventing its translocation to the nucleus. Participates in angiogenesis. Activates the Hippo signaling pathway in response to cell contact inhibition via interaction with and ubiquitination by Crumbs complex-bound WWP1. Ubiquitinated AMOTL2 then interacts with LATS2 which in turn phosphorylates YAP1, excluding it from the nucleus and localizing it to the cytoplasm and tight junctions, therefore ultimately repressing YAP1-driven transcription of target genes. Acts to inhibit WWTR1/TAZ transcriptional coactivator activity via sequestering WWTR1/TAZ in the cytoplasm and at tight junctions. Regulates the size and protein composition of the podosome cortex and core at myofibril neuromuscular junctions. Selectively promotes FGF-induced MAPK activation through SRC. May play a role in the polarity, proliferation and migration of endothelial cells. This is Angiomotin-like protein 2 from Canis lupus familiaris (Dog).